The chain runs to 580 residues: Adenine deaminase 2 (580 aa).

Belongs to the metallo-dependent hydrolases superfamily. Adenine deaminase family. Requires Mn(2+) as cofactor.

It carries out the reaction adenine + H2O + H(+) = hypoxanthine + NH4(+). This chain is Adenine deaminase 2, found in Latilactobacillus sakei subsp. sakei (strain 23K) (Lactobacillus sakei subsp. sakei).